A 452-amino-acid polypeptide reads, in one-letter code: Bifunctional protein GlmU (452 aa).

The segment at 1–226 (MSLHIIILAA…LHEVEGVNNR (226 aa)) is pyrophosphorylase. UDP-N-acetyl-alpha-D-glucosamine is bound by residues 8–11 (LAAG), Lys-22, Gln-73, 78–79 (GT), 100–102 (YGD), Gly-136, Glu-151, Asn-166, and Asn-224. Asp-102 contacts Mg(2+). Position 224 (Asn-224) interacts with Mg(2+). The segment at 227 to 247 (IQLAALERAYQQQVAEELMLA) is linker. An N-acetyltransferase region spans residues 248–452 (GATLRDPARV…IDGWTRPVKK (205 aa)). The UDP-N-acetyl-alpha-D-glucosamine site is built by Arg-330 and Lys-348. The active-site Proton acceptor is the His-360. UDP-N-acetyl-alpha-D-glucosamine contacts are provided by Tyr-363 and Asn-374. Acetyl-CoA is bound by residues Ala-377, 383 to 384 (NY), Ser-402, Ala-420, and Arg-437.

This sequence in the N-terminal section; belongs to the N-acetylglucosamine-1-phosphate uridyltransferase family. In the C-terminal section; belongs to the transferase hexapeptide repeat family. In terms of assembly, homotrimer. The cofactor is Mg(2+).

The protein localises to the cytoplasm. The enzyme catalyses alpha-D-glucosamine 1-phosphate + acetyl-CoA = N-acetyl-alpha-D-glucosamine 1-phosphate + CoA + H(+). It carries out the reaction N-acetyl-alpha-D-glucosamine 1-phosphate + UTP + H(+) = UDP-N-acetyl-alpha-D-glucosamine + diphosphate. The protein operates within nucleotide-sugar biosynthesis; UDP-N-acetyl-alpha-D-glucosamine biosynthesis; N-acetyl-alpha-D-glucosamine 1-phosphate from alpha-D-glucosamine 6-phosphate (route II): step 2/2. It functions in the pathway nucleotide-sugar biosynthesis; UDP-N-acetyl-alpha-D-glucosamine biosynthesis; UDP-N-acetyl-alpha-D-glucosamine from N-acetyl-alpha-D-glucosamine 1-phosphate: step 1/1. It participates in bacterial outer membrane biogenesis; LPS lipid A biosynthesis. Catalyzes the last two sequential reactions in the de novo biosynthetic pathway for UDP-N-acetylglucosamine (UDP-GlcNAc). The C-terminal domain catalyzes the transfer of acetyl group from acetyl coenzyme A to glucosamine-1-phosphate (GlcN-1-P) to produce N-acetylglucosamine-1-phosphate (GlcNAc-1-P), which is converted into UDP-GlcNAc by the transfer of uridine 5-monophosphate (from uridine 5-triphosphate), a reaction catalyzed by the N-terminal domain. This Hahella chejuensis (strain KCTC 2396) protein is Bifunctional protein GlmU.